Here is a 664-residue protein sequence, read N- to C-terminus: Ubiquinol oxidase subunit 1 (664 aa).

The next 2 helical transmembrane spans lie at 15–35 (PILV…LGLI) and 57–77 (LAAM…ADAI). Position 106 (H106) interacts with heme b. 12 helical membrane-spanning segments follow: residues 109 to 129 (IMIF…IVPL), 136 to 156 (VAFP…FILV), 190 to 210 (YIWA…NFFV), 233 to 253 (LCAS…VGLL), 278 to 298 (LIWA…FGVF), 316 to 336 (MVYA…HHFF), 347 to 367 (FFGI…FNWL), 383 to 403 (WAVG…MLAI), 414 to 434 (LFLI…GYIC), 456 to 476 (AFWF…IVGF), 490 to 510 (AWHP…LGIA), and 603 to 623 (ALIF…VGLV). Cu cation is bound by residues H284, Y288, H333, and H334. The 1'-histidyl-3'-tyrosine (His-Tyr) cross-link spans 284-288 (HPEVY). A Fe(II)-heme a-binding site is contributed by H419. H421 provides a ligand contact to heme b.

Belongs to the heme-copper respiratory oxidase family. Heterotetramer of the subunits 1, 2, 3 and 4.

Its subcellular location is the cell membrane. Its function is as follows. Catalytic subunit of the enzyme. Electrons originating in a quinol are transferred to the bimetallic center formed by heme a and copper B. This Acetobacter aceti protein is Ubiquinol oxidase subunit 1 (cyaA).